Reading from the N-terminus, the 713-residue chain is Cadherin-13 (713 aa).

Residues 1–22 (MQPRTPLVLCVLLSQVLLLTSA) form the signal peptide. The propeptide occupies 23–138 (EDLDCIPGFQ…RTSPVPRQKR (116 aa)). 2 N-linked (GlcNAc...) asparagine glycosylation sites follow: Asn-52 and Asn-86. 5 Cadherin domains span residues 139–245 (SIVV…RPIF), 246–363 (REGP…SPKF), 364–477 (TKKE…GPVF), 478–585 (YPDP…APFI), and 584–690 (FIYP…VDSN). N-linked (GlcNAc...) asparagine glycans are attached at residues Asn-382, Asn-489, Asn-500, Asn-530, Asn-598, Asn-638, and Asn-671. The GPI-anchor amidated asparagine moiety is linked to residue Asn-690. A propeptide spans 691 to 713 (AVGALRFSLPSLLLLSLFSLACL) (removed in mature form).

By contrast to classical cadherins, homodimerization in trans is not mediated by cadherin EC1 domain strand-swapping, but instead through a homophilic adhesive interface which joins two elongated EC1-EC2 domains through a region near their Ca2+-binding sites to form a tetrahedral, X-like shape.

The protein resides in the cell membrane. Its subcellular location is the cytoplasm. Functionally, cadherins are calcium-dependent cell adhesion proteins. They preferentially interact with themselves in a homophilic manner in connecting cells; cadherins may thus contribute to the sorting of heterogeneous cell types. May act as a negative regulator of neural cell growth. The chain is Cadherin-13 (CDH13) from Pongo abelii (Sumatran orangutan).